Here is a 707-residue protein sequence, read N- to C-terminus: Alpha-hemolysin translocation ATP-binding protein HlyB (707 aa).

A Peptidase C39 domain is found at aspartate 2–isoleucine 125. Residue histidine 83 is part of the active site. The ABC transmembrane type-1 domain maps to phenylalanine 154–glutamine 436. Transmembrane regions (helical) follow at residues leucine 158–valine 178, leucine 191–leucine 211, alanine 269–tyrosine 289, leucine 295–leucine 315, and alanine 387–isoleucine 407. The region spanning isoleucine 468–glutamine 703 is the ABC transporter domain. ATP is bound at residue glycine 502–serine 509.

It belongs to the ABC transporter superfamily. Protein-1 exporter (TC 3.A.1.109) family.

The protein resides in the cell membrane. In terms of biological role, involved in the export of hemolysin A. This chain is Alpha-hemolysin translocation ATP-binding protein HlyB (hlyB), found in Proteus vulgaris.